Reading from the N-terminus, the 375-residue chain is UDP-4-amino-4,6-dideoxy-N-acetyl-beta-L-altrosamine transaminase (375 aa).

Residues Tyr6, 26–29 (KQLT), Ala56, and Ser178 contribute to the substrate site. The residue at position 183 (Lys183) is an N6-(pyridoxal phosphate)lysine. Residues Asn228 and 313 to 316 (QVHY) each bind substrate.

It belongs to the DegT/DnrJ/EryC1 family.

It carries out the reaction UDP-4-amino-4,6-dideoxy-N-acetyl-beta-L-altrosamine + 2-oxoglutarate = UDP-2-acetamido-2,6-dideoxy-beta-L-arabino-hex-4-ulose + L-glutamate. In terms of biological role, catalyzes the second step in the biosynthesis of pseudaminic acid, a sialic-acid-like sugar that is used to modify flagellin. Uses UDP-2-acetamido-2,6-dideoxy-beta-L-arabino-4-hexulose as substrate producing UDP-4-amino-4,6-dideoxy-beta-L-AltNAc. The protein is UDP-4-amino-4,6-dideoxy-N-acetyl-beta-L-altrosamine transaminase (pseC) of Helicobacter pylori (strain ATCC 700392 / 26695) (Campylobacter pylori).